The following is a 463-amino-acid chain: D-inositol 3-phosphate glycosyltransferase (463 aa).

H40 is a 1D-myo-inositol 3-phosphate binding site. UDP-N-acetyl-alpha-D-glucosamine contacts are provided by residues 46–47 and G54; that span reads QP. 1D-myo-inositol 3-phosphate is bound by residues 51-56, K109, Y142, T166, and R186; that span reads DAGGMN. Positions 260, 265, and 318 each coordinate UDP-N-acetyl-alpha-D-glucosamine. The Mg(2+) site is built by F327, H328, and V330. 2 residues coordinate UDP-N-acetyl-alpha-D-glucosamine: E340 and E348. T354 is a binding site for Mg(2+). Residues 443-463 form a disordered region; that stretch reads VRDPVAARKPRRWTARRGVGA.

This sequence belongs to the glycosyltransferase group 1 family. MshA subfamily. Homodimer.

It catalyses the reaction 1D-myo-inositol 3-phosphate + UDP-N-acetyl-alpha-D-glucosamine = 1D-myo-inositol 2-acetamido-2-deoxy-alpha-D-glucopyranoside 3-phosphate + UDP + H(+). Catalyzes the transfer of a N-acetyl-glucosamine moiety to 1D-myo-inositol 3-phosphate to produce 1D-myo-inositol 2-acetamido-2-deoxy-glucopyranoside 3-phosphate in the mycothiol biosynthesis pathway. This chain is D-inositol 3-phosphate glycosyltransferase, found in Mycobacterium ulcerans (strain Agy99).